Reading from the N-terminus, the 470-residue chain is Argininosuccinate lyase (470 aa).

It belongs to the lyase 1 family. Argininosuccinate lyase subfamily.

The protein localises to the cytoplasm. The enzyme catalyses 2-(N(omega)-L-arginino)succinate = fumarate + L-arginine. It functions in the pathway amino-acid biosynthesis; L-arginine biosynthesis; L-arginine from L-ornithine and carbamoyl phosphate: step 3/3. The protein is Argininosuccinate lyase of Mycolicibacterium gilvum (strain PYR-GCK) (Mycobacterium gilvum (strain PYR-GCK)).